A 181-amino-acid chain; its full sequence is MASSIVSSAAVATRSNVAQASMVAPFTGLKSAASFPVTKKNNNVDITSLASNGGRVRCMQVWPPINMKKYETLSYLPDLSDEQLLKEVEYLLKNGWVPCLEFETEHGFVYRENHKSPGYYDGRYWTMWKLPMFGCTDATQVLAEVQEAKKAYPQAWIRIIGFDNVRQVQCISFIAYKPEGY.

A chloroplast-targeting transit peptide spans 1–57 (MASSIVSSAAVATRSNVAQASMVAPFTGLKSAASFPVTKKNNNVDITSLASNGGRVR).

Belongs to the RuBisCO small chain family. In terms of assembly, heterohexadecamer of 8 large and 8 small subunits.

The protein localises to the plastid. It is found in the chloroplast. RuBisCO catalyzes two reactions: the carboxylation of D-ribulose 1,5-bisphosphate, the primary event in carbon dioxide fixation, as well as the oxidative fragmentation of the pentose substrate. Both reactions occur simultaneously and in competition at the same active site. Although the small subunit is not catalytic it is essential for maximal activity. The chain is Ribulose bisphosphate carboxylase small subunit, chloroplastic 6 from Solanum tuberosum (Potato).